The sequence spans 662 residues: Retaining alpha-galactosidase (662 aa).

The first 19 residues, 1–19, serve as a signal peptide directing secretion; sequence MKKLTFLLLCVLCTLSLQA. Ca(2+) is bound at residue Glu174. Catalysis depends on Asp415, which acts as the Nucleophile. Residues Glu464 and Glu470 each coordinate Ca(2+). The Proton donor/acceptor role is filled by Glu470.

It belongs to the glycosyl hydrolase 97 family. In terms of assembly, monomer. Requires Ca(2+) as cofactor.

The enzyme catalyses Hydrolysis of terminal, non-reducing alpha-D-galactose residues in alpha-D-galactosides, including galactose oligosaccharides, galactomannans and galactolipids.. Its activity is regulated as follows. Inhibited by EDTA in vitro. Its function is as follows. Galactosidase that is able to hydrolyze the alpha-1,6 disaccharide melibiose and the synthetic p-nitrophenyl alpha-galactoside substrate (pNP-Gal), with retention of the anomeric configuration. Does not hydrolyze DNP-Glc or pNP-Glc. The chain is Retaining alpha-galactosidase from Bacteroides thetaiotaomicron (strain ATCC 29148 / DSM 2079 / JCM 5827 / CCUG 10774 / NCTC 10582 / VPI-5482 / E50).